Reading from the N-terminus, the 599-residue chain is UvrABC system protein C (599 aa).

In terms of domain architecture, GIY-YIG spans 13 to 91 (NLPGVYRMIN…IKGFMPRYNV (79 aa)). One can recognise a UVR domain in the interval 200–235 (QQVMDELGEKMNEAAEKMEYELAAVYRDRIQSLRQV).

It belongs to the UvrC family. As to quaternary structure, interacts with UvrB in an incision complex.

It localises to the cytoplasm. The UvrABC repair system catalyzes the recognition and processing of DNA lesions. UvrC both incises the 5' and 3' sides of the lesion. The N-terminal half is responsible for the 3' incision and the C-terminal half is responsible for the 5' incision. The polypeptide is UvrABC system protein C (Methylobacillus flagellatus (strain ATCC 51484 / DSM 6875 / VKM B-1610 / KT)).